The primary structure comprises 290 residues: 4-hydroxybenzoate octaprenyltransferase (290 aa).

The next 8 helical transmembrane spans lie at 23-43, 46-66, 99-119, 141-161, 163-183, 213-233, 234-254, and 268-288; these read IGALLLLWPTLWALWVATPGV, LWILAVFVAGVWLMRAAGCVV, LFVVLVLISFLLVLTLNTMTI, LPQVVLGAAFGWSIPMAFAAV, ESVPLSCWLMFLANILWAVAY, LIIGIFQIGVLALMAIIGELN, GLGWGYYWSILVAGALFVYQQ, and AFMNNNYVGLVLFLGLAMSYW.

Belongs to the UbiA prenyltransferase family. Mg(2+) serves as cofactor.

It localises to the cell inner membrane. The catalysed reaction is all-trans-octaprenyl diphosphate + 4-hydroxybenzoate = 4-hydroxy-3-(all-trans-octaprenyl)benzoate + diphosphate. The protein operates within cofactor biosynthesis; ubiquinone biosynthesis. In terms of biological role, catalyzes the prenylation of para-hydroxybenzoate (PHB) with an all-trans polyprenyl group. Mediates the second step in the final reaction sequence of ubiquinone-8 (UQ-8) biosynthesis, which is the condensation of the polyisoprenoid side chain with PHB, generating the first membrane-bound Q intermediate 3-octaprenyl-4-hydroxybenzoate. The chain is 4-hydroxybenzoate octaprenyltransferase from Escherichia coli (strain UTI89 / UPEC).